Reading from the N-terminus, the 183-residue chain is Archaemetzincin (183 aa).

H131 serves as a coordination point for Zn(2+). The active-site Proton acceptor is the E132. Positions 135, 141, 142, 147, and 166 each coordinate Zn(2+).

The protein belongs to the peptidase M54 family. Monomer. Zn(2+) is required as a cofactor.

Probable zinc metalloprotease whose natural substrate is unknown. In Saccharolobus solfataricus (strain ATCC 35092 / DSM 1617 / JCM 11322 / P2) (Sulfolobus solfataricus), this protein is Archaemetzincin.